Consider the following 512-residue polypeptide: tRNA modification GTPase gtpbp3, mitochondrial (512 aa).

In terms of domain architecture, TrmE-type G spans 246–434; sequence GANIAIVGPP…LLNLLKLNLK (189 aa). Residues 253-260, 300-304, and 375-378 each bind GTP; these read GPPNAGKS, DTAGL, and NKSD.

Belongs to the TRAFAC class TrmE-Era-EngA-EngB-Septin-like GTPase superfamily. TrmE GTPase family.

It is found in the mitochondrion. Functionally, GTPase involved in the 5-carboxymethylaminomethyl modification (mnm(5)s(2)U34) of the wobble uridine base in mitochondrial tRNAs. In Dictyostelium discoideum (Social amoeba), this protein is tRNA modification GTPase gtpbp3, mitochondrial (gtpbp3).